Consider the following 158-residue polypeptide: Ribonuclease H (158 aa).

Residues 3–144 (ELKLIHIFTD…CDQLARAAAE (142 aa)) form the RNase H type-1 domain. Mg(2+) contacts are provided by D12, E50, D72, and D136. The interval 137–158 (QLARAAAEASPTQVDEGYQPES) is disordered.

It belongs to the RNase H family. Monomer. Requires Mg(2+) as cofactor.

It is found in the cytoplasm. The catalysed reaction is Endonucleolytic cleavage to 5'-phosphomonoester.. Functionally, endonuclease that specifically degrades the RNA of RNA-DNA hybrids. The sequence is that of Ribonuclease H from Shewanella sp. (strain ANA-3).